We begin with the raw amino-acid sequence, 297 residues long: N-acetylmuramoyl-L-alanine amidase XlyA (297 aa).

A signal peptide spans 1 to 44 (MVNIIQDFIPVGANNRPGYAMTPLYITVHNTANTAVGADAAAHA). The region spanning 45–140 (RYLKNPDTTT…KYWSGKECPR (96 aa)) is the N-acetylmuramoyl-L-alanine amidase domain. The LysM domain occupies 159-203 (QTYVVKQGDTLTSIARAFGVTVAQLQEWNNIEDPNLIRVGQVLIV).

Belongs to the N-acetylmuramoyl-L-alanine amidase 2 family.

Its subcellular location is the secreted. It carries out the reaction Hydrolyzes the link between N-acetylmuramoyl residues and L-amino acid residues in certain cell-wall glycopeptides.. In terms of biological role, autolysins are involved in some important biological processes such as cell separation, cell-wall turnover, competence for genetic transformation, formation of the flagella and sporulation. The polypeptide is N-acetylmuramoyl-L-alanine amidase XlyA (xlyA) (Bacillus subtilis (strain 168)).